Here is a 151-residue protein sequence, read N- to C-terminus: MDPALRSYHQRLRLYTPVAMGINLAASSQPLDPEGPIAVTPRPPIRPSSGKAPHPEAPRRSPNWATAGEVDVGDELIAISDERGPPRHDRPPLATSTAPSPHPRPPGYTAVVSPMALQAVDAPSLFVAWLAARWLRGASGLGASCVGLRGM.

Residues 27–107 are disordered; the sequence is SSQPLDPEGP…APSPHPRPPG (81 aa). The segment covering 80 to 91 has biased composition (basic and acidic residues); that stretch reads SDERGPPRHDRP.

It is found in the host nucleus. Its subcellular location is the host nucleolus. This Human herpesvirus 1 (strain F) (HHV-1) protein is US8.5 protein (US8.5).